Consider the following 220-residue polypeptide: Probable GTP-binding protein EngB (220 aa).

Residues 24-207 (PQPEVAFAGR…HELIESWIAP (184 aa)) form the EngB-type G domain. Residues 32–39 (GRSNAGKS), 59–63 (GRTQH), 81–84 (DLPG), 148–151 (TKCD), and 185–188 (LFSA) each bind GTP. Positions 39 and 61 each coordinate Mg(2+).

It belongs to the TRAFAC class TrmE-Era-EngA-EngB-Septin-like GTPase superfamily. EngB GTPase family. The cofactor is Mg(2+).

Necessary for normal cell division and for the maintenance of normal septation. This chain is Probable GTP-binding protein EngB, found in Paraburkholderia phymatum (strain DSM 17167 / CIP 108236 / LMG 21445 / STM815) (Burkholderia phymatum).